The chain runs to 119 residues: 5-hydroxyisourate hydrolase (119 aa).

Substrate contacts are provided by H8, R47, and Y116.

Belongs to the transthyretin family. 5-hydroxyisourate hydrolase subfamily. Homotetramer.

It carries out the reaction 5-hydroxyisourate + H2O = 5-hydroxy-2-oxo-4-ureido-2,5-dihydro-1H-imidazole-5-carboxylate + H(+). It functions in the pathway purine metabolism; urate degradation; (S)-allantoin from urate: step 2/3. In terms of biological role, catalyzes the hydrolysis of 5-hydroxyisourate (HIU) to 2-oxo-4-hydroxy-4-carboxy-5-ureidoimidazoline (OHCU). This Halalkalibacterium halodurans (strain ATCC BAA-125 / DSM 18197 / FERM 7344 / JCM 9153 / C-125) (Bacillus halodurans) protein is 5-hydroxyisourate hydrolase.